Consider the following 557-residue polypeptide: Ribonuclease J 2 (557 aa).

Residues His-76, His-78, His-144, and Glu-166 each contribute to the Zn(2+) site. 366–370 (HASSH) contacts substrate.

The protein belongs to the metallo-beta-lactamase superfamily. RNA-metabolizing metallo-beta-lactamase-like family. Bacterial RNase J subfamily. In terms of assembly, homodimer, may be a subunit of the RNA degradosome. The cofactor is Zn(2+).

Its subcellular location is the cytoplasm. An RNase that has 5'-3' exonuclease and possibly endoonuclease activity. Involved in maturation of rRNA and in some organisms also mRNA maturation and/or decay. The polypeptide is Ribonuclease J 2 (Staphylococcus saprophyticus subsp. saprophyticus (strain ATCC 15305 / DSM 20229 / NCIMB 8711 / NCTC 7292 / S-41)).